We begin with the raw amino-acid sequence, 1349 residues long: MEMGKAAAVVLAVNGKRYEAAGVDPSTTLLEFLRTHTPVRGPKLGCGEGGCGACVVLVSKYDPATDEVTEFSASSCLTLLHSVDRCSVTTSEGIGNTKDGYHPVQQRLSGFHASQCGFCTPGMCMSIFSALVKADKAANRPAPPAGFSKLTSSEAEKAVSGNLCRCTGYRPIVDACKSFAADVDLEDLGLNCFWKKGDEPADVSKLPGYNSGDVCTFPDFLKSEMKSSIQQANSAPVPVSDDGWYRPRSIDELHRLFQSSSFDENSVKIVASNTGSGVYKDQDLYDKYIDIKGIPELSVINRNDKGIELGSVVSISKAIEVLSDGNLVFRKIAGHLNKVASPFVRNTATIGGNIVMAQRLPFASDIATILLAAGSTVTIQVASKRLCFTLEEFLQQPPCDSRTLLLSIFIPEWGSNDVTFETFRAAPRPLGNAVSYVNSAFLARTSLDAASKDHLIEDICLAFGAYGADHAIRARKVEDYLKGKTVSSSVILEAVRLLKGSIKPSEGSTHPEYRISLAVSFLFTFLSSLANSLNESAKVSGTNEHSPEKQLKLDINDLPIRSRQEIFFTDAYKPVGKAIKKAGVEIQASGEAVYVDDIPAPKDCLYGAFIYSTHPHAHVKSINFKPSLASQKIITVITAKDIPSGGQNVGYSFPMIGEEALFADPVAEFAGQNIGVVIAQTQKYAYMAAKQAIIEYSTENLQPPILTIEDAIERSSFFQTLPFVAPKPVGDYDKGMSEADHKILSAEVKIESQYFFYMEPQVALAIPDEDNCITIYFSTQLPESTQNVVAKCVGIPFHNVRVITRRVGGGFGGKALKSMHVACACAVAALKLQRPVRMYLDRKTDMIMAGGRHPMKVKYSVGFKSNGKITALHLDLGINGGISPDMSPMIAAPVIGSLKKYNWGNLAFDTKVCKTNVSSKSSMRAPGDAQGSFIAEAIIEHVASALSADTNTIRRKNLHDFESLAVFFGDSAGEASTYSLVTMFDKLASSPEYQHRAEMVEQFNRSNKWKKRGISCVPVTYEVQLRPTPGKVSIMNDGSIAVEVGGVELGQGLWTKVKQMTAFGLGQLCPGGGESLLDKVRVIQADTLSMIQGGVTGGSTTSETSCEAVRKSCVALVESLKPIKENLEAKTGTVEWSALIAQASMASVNLSAHAYWTPDPTFTSYLNYGAGTSEVEIDVLTGATTILRSDLVYDCGQSLNPAVDLGQVEGAFVQGVGFFTNEEYATNSDGLVIHDGTWTYKIPTVDTIPKQFNVELINSARDQKRVLSSKASGEPPLLLASSVHCAMREAIRAARKEFSVCTGPANSAITFQMDVPATMPVVKELCGLDVVERYLESVSAASPTNTAKA.

One can recognise a 2Fe-2S ferredoxin-type domain in the interval 7–94; it reads AAVVLAVNGK…RCSVTTSEGI (88 aa). Residues Cys-46, Cys-51, and Cys-54 each contribute to the [2Fe-2S] cluster site. The 179-residue stretch at 237–415 folds into the FAD-binding PCMH-type domain; that stretch reads VPVSDDGWYR…LSIFIPEWGS (179 aa).

It belongs to the xanthine dehydrogenase family. In terms of assembly, aldehyde oxidases (AO) are homodimers and heterodimers of AO subunits. The cofactor is [2Fe-2S] cluster. Requires FAD as cofactor. Mo-molybdopterin is required as a cofactor. In terms of tissue distribution, mostly expressed in coleoptiles, and, to a lower extent, in mesocotyl and roots.

It localises to the cytoplasm. It catalyses the reaction indole-3-acetaldehyde + O2 + H2O = (indol-3-yl)acetate + H2O2 + H(+). In terms of biological role, in higher plants aldehyde oxidases (AO) appear to be homo- and heterodimeric assemblies of AO subunits with probably different physiological functions. Involved in the biosynthesis of auxin. The polypeptide is Indole-3-acetaldehyde oxidase (AO2) (Zea mays (Maize)).